The primary structure comprises 1022 residues: Probable E3 ubiquitin-protein ligase HERC6 (1022 aa).

RCC1 repeat units follow at residues 41–92 (NHRV…AVCH), 93–145 (KGRV…ALSK), 147–198 (SQVF…ALSL), 200–253 (GTSF…VLTQ), and 254–304 (DGKV…AYVH). The HECT domain maps to 693 to 1017 (EATDFCKVLV…INNNRGFVSP (325 aa)). Cys985 (glycyl thioester intermediate) is an active-site residue.

As to expression, detected in brain, heart, placenta and testis.

It is found in the cytoplasm. It localises to the cytosol. The enzyme catalyses S-ubiquitinyl-[E2 ubiquitin-conjugating enzyme]-L-cysteine + [acceptor protein]-L-lysine = [E2 ubiquitin-conjugating enzyme]-L-cysteine + N(6)-ubiquitinyl-[acceptor protein]-L-lysine.. It participates in protein modification; protein ubiquitination. Functionally, E3 ubiquitin-protein ligase which accepts ubiquitin from an E2 ubiquitin-conjugating enzyme in the form of a thioester and then directly transfers the ubiquitin to targeted substrates. This Homo sapiens (Human) protein is Probable E3 ubiquitin-protein ligase HERC6 (HERC6).